The sequence spans 257 residues: Zinc transporter ZupT (257 aa).

A run of 3 helical transmembrane segments spans residues leucine 5–glycine 25, leucine 32–methionine 52, and glycine 61–leucine 81. Residues asparagine 120 and glutamate 123 each coordinate Fe(2+). 2 residues coordinate Zn(2+): glutamate 123 and histidine 148. The next 4 membrane-spanning stretches (helical) occupy residues leucine 137–alanine 157, isoleucine 171–isoleucine 191, methionine 195–leucine 215, and glycine 236–isoleucine 256. Fe(2+) is bound by residues asparagine 149, glutamate 152, and glutamate 181. Glutamate 152 serves as a coordination point for Zn(2+).

Belongs to the ZIP transporter (TC 2.A.5) family. ZupT subfamily.

It is found in the cell inner membrane. It carries out the reaction Zn(2+)(in) = Zn(2+)(out). Its function is as follows. Mediates zinc uptake. May also transport other divalent cations. The polypeptide is Zinc transporter ZupT (Escherichia coli O81 (strain ED1a)).